A 299-amino-acid chain; its full sequence is Pseudouridine-5'-phosphate glycosidase (299 aa).

Glutamate 23 acts as the Proton donor in catalysis. Substrate is bound by residues lysine 84 and valine 104. Aspartate 136 provides a ligand contact to Mn(2+). Substrate is bound at residue 138–140 (SAD). Lysine 157 acts as the Nucleophile in catalysis.

Belongs to the pseudouridine-5'-phosphate glycosidase family. As to quaternary structure, homotrimer. Mn(2+) serves as cofactor.

It carries out the reaction D-ribose 5-phosphate + uracil = psi-UMP + H2O. Catalyzes the reversible cleavage of pseudouridine 5'-phosphate (PsiMP) to ribose 5-phosphate and uracil. Functions biologically in the cleavage direction, as part of a pseudouridine degradation pathway. This Solibacter usitatus (strain Ellin6076) protein is Pseudouridine-5'-phosphate glycosidase.